The sequence spans 464 residues: Pup--protein ligase (464 aa).

Glu-14 contacts Mg(2+). ATP is bound at residue Arg-58. Tyr-60 provides a ligand contact to Mg(2+). The Proton acceptor role is filled by Asp-62. Position 68 (Glu-68) interacts with Mg(2+). Residues Thr-71 and Trp-430 each coordinate ATP.

This sequence belongs to the Pup ligase/Pup deamidase family. Pup-conjugating enzyme subfamily.

The catalysed reaction is ATP + [prokaryotic ubiquitin-like protein]-L-glutamate + [protein]-L-lysine = ADP + phosphate + N(6)-([prokaryotic ubiquitin-like protein]-gamma-L-glutamyl)-[protein]-L-lysine.. The protein operates within protein degradation; proteasomal Pup-dependent pathway. It functions in the pathway protein modification; protein pupylation. Its function is as follows. Catalyzes the covalent attachment of the prokaryotic ubiquitin-like protein modifier Pup to the proteasomal substrate proteins, thereby targeting them for proteasomal degradation. This tagging system is termed pupylation. The ligation reaction involves the side-chain carboxylate of the C-terminal glutamate of Pup and the side-chain amino group of a substrate lysine. This is Pup--protein ligase from Micrococcus luteus (strain ATCC 4698 / DSM 20030 / JCM 1464 / CCM 169 / CCUG 5858 / IAM 1056 / NBRC 3333 / NCIMB 9278 / NCTC 2665 / VKM Ac-2230) (Micrococcus lysodeikticus).